The chain runs to 155 residues: Large ribosomal subunit protein uL30 (155 aa).

Belongs to the universal ribosomal protein uL30 family. As to quaternary structure, part of the 50S ribosomal subunit.

The protein is Large ribosomal subunit protein uL30 of Nanoarchaeum equitans (strain Kin4-M).